A 582-amino-acid polypeptide reads, in one-letter code: MDATAFPYGLRVLVVDDDPTWLKILEKMLRKCSYEVTTCGLARVALDILRERKNKFDIVISDVNMPDMDGFKLLEHIGLEMDLPVIMMSIDGETSRVMKGVQHGACDYLLKPVRMKELRNIWQHVYRKKMHEVKEIEGNDSCDDLQILRNSFEGLDEKSLFMRSDSDTMRKRKDVDKDHADQESSDGNTVKKARVVWSVDLHQKFVNAVNQIGFDKVGPKKILDLMNVPGLTRENVASHLQKYRLYLSRLQKQNEERILGAARQDFSHKGTSENLNLRSSFQEQPSNIANGYPHASQNIQTQANMLDSQLEDTKSTVPLPVPDKKRTLASDAADSQNVTSASSLGGVLSFKSMPVNQDRKPSETMILECQAWTGGIPSKQFMQYPKHNHERCDLLGDYSCLPKPDLEHPVGPSNLYAPPPLISMSCGMEGDARDFSDVKPAIMDCIKSLSPALTCTVDSVSVQLSDSVVTSIDGDLKSSGVDGLPSIKDCCLDQTNSQGSLRPSQEPSIIGSTELASLPEDLPSYPLHGVSLENIGLSSIDLLNYSDAMILSGLQSNWYDDLEFSSEMMDYPSIDECLFASS.

The Response regulatory domain maps to 11 to 126 (RVLVVDDDPT…ELRNIWQHVY (116 aa)). Aspartate 62 carries the 4-aspartylphosphate modification. Positions 166-182 (SDTMRKRKDVDKDHADQ) are enriched in basic and acidic residues. Positions 166-187 (SDTMRKRKDVDKDHADQESSDG) are disordered. A DNA-binding region (myb-like GARP) is located at residues 189-248 (TVKKARVVWSVDLHQKFVNAVNQIGFDKVGPKKILDLMNVPGLTRENVASHLQKYRLYLS).

Belongs to the ARR family. Type-B subfamily. In terms of processing, two-component system major event consists of a His-to-Asp phosphorelay between a sensor histidine kinase (HK) and a response regulator (RR). In plants, the His-to-Asp phosphorelay involves an additional intermediate named Histidine-containing phosphotransfer protein (HPt). This multistep phosphorelay consists of a His-Asp-His-Asp sequential transfer of a phosphate group between first a His and an Asp of the HK protein, followed by the transfer to a conserved His of the HPt protein and finally the transfer to an Asp in the receiver domain of the RR protein.

It is found in the nucleus. Its function is as follows. Transcriptional activator that binds specific DNA sequence. Functions as a response regulator involved in His-to-Asp phosphorelay signal transduction system. Phosphorylation of the Asp residue in the receiver domain activates the ability of the protein to promote the transcription of target genes. May directly activate some type-A response regulators in response to cytokinins. This is Two-component response regulator ORR26 from Oryza sativa subsp. japonica (Rice).